A 123-amino-acid polypeptide reads, in one-letter code: Putative EG45-like domain containing protein 1 (123 aa).

Positions Met1–Ala21 are cleaved as a signal peptide. Residues Gly24 to Pro123 enclose the Expansin-like EG45 domain.

It is found in the secreted. Its function is as follows. Might have a systemic role in water and solute homeostasis. The protein is Putative EG45-like domain containing protein 1 (EGC1) of Arabidopsis thaliana (Mouse-ear cress).